We begin with the raw amino-acid sequence, 149 residues long: Large ribosomal subunit protein bL9 (149 aa).

Belongs to the bacterial ribosomal protein bL9 family.

Binds to the 23S rRNA. The chain is Large ribosomal subunit protein bL9 from Geobacillus sp. (strain WCH70).